The following is a 681-amino-acid chain: MDDNTGTEGGACSESERAGGWFIVEAIVDRRTGDPISSDDDEEEDEAGEDFVDFIDDTRSLGDGQEVAQELFQQQTAADDDVAVQTVKRKFAPSPYFSPVCEQASIEHELSPRLDAIKLGRQSAKAKRRLFELPDSGYGQTQVDTESGPKQVQGSSETQDGRQDDDEGSVVQSTLDTGNQNGRQNNDEGSGRNVGEHGSQEEERAGGDGEESDLQSTSTGKGAGGVVEILRASNKKATLLGKFKEQFGLGYNELIRHFKSDRTSCADWVVCVFGVFCTVAEGIKTLIQPLCDYAHIQVLPCQWGMTVLMLVRYKRAKNRETVAKGLSTLLNVPESQMLIEPPKLRSGPAALYWYKTSMSSCSDVYGETPEWIVRQTMVGHAMEDAQFSLSEMVQWAYDHDITDESTLAYEYALIADTDSNAAAFLSSNCQAKYLKDACTMCRHYKRGEQARMSMSEWIWFRGDKVQGDGDWKPIVQFLRYQDVEFIPFLCAFKTFLQGVPKKSCLVFYGPADTGKSYFCMSLLRFLGGAVISYANSSSHFWLQPLSEAKIGLLDDATSQCWNYIDTYLRNALDGNQICVDRKHRALLQLKCPPLLITTNINPLTDERWKFLRSRLQLFTFKNPFPVTTQGEPMYTLNDQNWKCFFRRLWARLSLTDPEDEEEHGNPSEPFRCVPGQNARTI.

A Nuclear localization signal motif is present at residues 88–90 (KRK). Phosphoserine; by host is present on residues serine 94, serine 98, and serine 111. A Nuclear export signal motif is present at residues 110–119 (LSPRLDAIKL). The interval 124 to 221 (AKAKRRLFEL…SDLQSTSTGK (98 aa)) is disordered. Composition is skewed to polar residues over residues 138 to 158 (YGQT…SSET) and 170 to 184 (VVQS…NGRQ). Positions 185 to 207 (NNDEGSGRNVGEHGSQEEERAGG) are enriched in basic and acidic residues. Positions 218-384 (STGKGAGGVV…QTMVGHAMED (167 aa)) are DNA-binding region. Residues 483-633 (VEFIPFLCAF…FPVTTQGEPM (151 aa)) form the SF3 helicase domain. Position 509-516 (509-516 (GPADTGKS)) interacts with ATP. Lysine 590 is covalently cross-linked (Glycyl lysine isopeptide (Lys-Gly) (interchain with G-Cter in SUMO)). The disordered stretch occupies residues 657–681 (PEDEEEHGNPSEPFRCVPGQNARTI).

The protein belongs to the papillomaviridae E1 protein family. In terms of assembly, can form hexamers. Interacts with E2 protein; this interaction increases E1 DNA binding specificity. Interacts with host DNA polymerase subunit POLA2. Interacts with host single stranded DNA-binding protein RPA1. Interacts with host TOP1; this interaction stimulates the enzymatic activity of TOP1. Phosphorylated. Post-translationally, sumoylated.

The protein resides in the host nucleus. The catalysed reaction is Couples ATP hydrolysis with the unwinding of duplex DNA by translocating in the 3'-5' direction.. The enzyme catalyses ATP + H2O = ADP + phosphate + H(+). Its function is as follows. ATP-dependent DNA 3'-5' helicase required for initiation of viral DNA replication. It forms a complex with the viral E2 protein. The E1-E2 complex binds to the replication origin which contains binding sites for both proteins. During the initial step, a dimer of E1 interacts with a dimer of protein E2 leading to a complex that binds the viral origin of replication with high specificity. Then, a second dimer of E1 displaces the E2 dimer in an ATP-dependent manner to form the E1 tetramer. Following this, two E1 monomers are added to each half of the site, which results in the formation of two E1 trimers on the viral ori. Subsequently, two hexamers will be created. The double hexamer acts as a bi-directional helicase machinery and unwinds the viral DNA and then recruits the host DNA polymerase to start replication. This Homo sapiens (Human) protein is Replication protein E1.